A 375-amino-acid chain; its full sequence is DNA replication and repair protein RecF (375 aa).

Position 30 to 37 (30 to 37 (GENAQGKT)) interacts with ATP.

This sequence belongs to the RecF family.

It is found in the cytoplasm. Functionally, the RecF protein is involved in DNA metabolism; it is required for DNA replication and normal SOS inducibility. RecF binds preferentially to single-stranded, linear DNA. It also seems to bind ATP. The polypeptide is DNA replication and repair protein RecF (Latilactobacillus sakei subsp. sakei (strain 23K) (Lactobacillus sakei subsp. sakei)).